The sequence spans 595 residues: Peptidyl-prolyl cis-trans isomerase CYP65 (595 aa).

A U-box domain is found at 35-108 (KSLPYYCCAL…GEYHCPVLNK (74 aa)). The PPIase cyclophilin-type domain occupies 342-496 (KKGYVQFQTT…EEIKIIEASV (155 aa)). Disordered stretches follow at residues 503–546 (ELDE…GGGG) and 576–595 (SKKRKTTASASTGFKDFSSW). A compositionally biased stretch (basic and acidic residues) spans 510–525 (KEKAEKEKNEDKDIEK). The span at 582–595 (TASASTGFKDFSSW) shows a compositional bias: polar residues.

This sequence belongs to the cyclophilin-type PPIase family. PPIL2 subfamily. As to expression, expressed in leaves, flower buds and stems. Lower levels of expression in roots.

Its subcellular location is the nucleus. It carries out the reaction [protein]-peptidylproline (omega=180) = [protein]-peptidylproline (omega=0). The catalysed reaction is S-ubiquitinyl-[E2 ubiquitin-conjugating enzyme]-L-cysteine + [acceptor protein]-L-lysine = [E2 ubiquitin-conjugating enzyme]-L-cysteine + N(6)-ubiquitinyl-[acceptor protein]-L-lysine.. The protein operates within protein modification; protein ubiquitination. In terms of biological role, may catalyze the cis-trans isomerization of proline imidic peptide bonds in oligopeptides thereby assisting the folding of proteins. May also function as a chaperone, playing a role in intracellular transport of proteins. May also have a protein ubiquitin ligase activity acting as an E3 ubiquitin protein ligase or as a ubiquitin-ubiquitin ligase promoting elongation of ubiquitin chains on proteins. This chain is Peptidyl-prolyl cis-trans isomerase CYP65 (CYP65), found in Arabidopsis thaliana (Mouse-ear cress).